Reading from the N-terminus, the 196-residue chain is MHPLSIEGAWSQEPVIHSDHRGRSHEWFRGESFRQAFGHDFPVAQVNVAVSHRGALRGIHYTEIPPGQAKYSVCVRGAGLDVVVDVRIGSPTFGRWEIVPMDAERNTAVYLTAGLGRAFLSLTDDATLVYLCSSGYAPAREHSVNPLDPDLGIAWPDDIEPLLSDRDENAPTLATAERLGLLPTYQAWQEQQQAQR.

Residues R21, E26, 45–47 (QVN), and R57 each bind substrate. Catalysis depends on H60, which acts as the Proton acceptor. The substrate site is built by K70 and R117. Y130 functions as the Proton donor in the catalytic mechanism. Positions 141 and 166 each coordinate substrate.

The protein belongs to the dTDP-4-dehydrorhamnose 3,5-epimerase family. Homodimer.

It catalyses the reaction dTDP-4-dehydro-6-deoxy-alpha-D-glucose = dTDP-4-dehydro-6-deoxy-alpha-D-allose. Its pathway is antibiotic biosynthesis. Its function is as follows. Involved in the biosynthesis of dTDP-6-deoxy-D-allose, an intermediate in the biosynthesis of mycinose, which is one of the two unusual sugars attached to the 16-membered macrolactone ring of the aglycone antibiotic chalcomycin. Catalyzes the conversion of dTDP-4-oxo-6-deoxyglucose to dTDP-4-oxo-6-deoxyallose, via a C-3 epimerization. The chain is dTDP-4-dehydro-6-deoxyglucose 3-epimerase from Streptomyces bikiniensis.